A 146-amino-acid chain; its full sequence is Basic phospholipase A2 beta-bungarotoxin A1 chain (146 aa).

Residues 1–19 (MNPAHLLVLPAVCVSFLGA) form the signal peptide. Residues 20–27 (SIIPPQSL) constitute a propeptide that is removed on maturation. Disulfide bonds link cysteine 54/cysteine 145, cysteine 56/cysteine 72, cysteine 71/cysteine 126, cysteine 78/cysteine 119, cysteine 87/cysteine 112, and cysteine 105/cysteine 117. Ca(2+) is bound by residues tyrosine 55, glycine 57, and glycine 59. Residue histidine 75 is part of the active site. Aspartate 76 serves as a coordination point for Ca(2+). Residue aspartate 120 is part of the active site.

The protein belongs to the phospholipase A2 family. Group I subfamily. D49 sub-subfamily. As to quaternary structure, heterodimer with beta-bungarotoxin B chain; disulfide-linked. The A chain has phospholipase A2 activity and the B chain shows homology with the basic protease inhibitors. Ca(2+) is required as a cofactor. Expressed by the venom gland.

It is found in the secreted. The enzyme catalyses a 1,2-diacyl-sn-glycero-3-phosphocholine + H2O = a 1-acyl-sn-glycero-3-phosphocholine + a fatty acid + H(+). Functionally, snake venom phospholipase A2 (PLA2) that inhibits neuromuscular transmission by blocking acetylcholine release from the nerve termini. PLA2 catalyzes the calcium-dependent hydrolysis of the 2-acyl groups in 3-sn-phosphoglycerides. This chain is Basic phospholipase A2 beta-bungarotoxin A1 chain, found in Bungarus flaviceps flaviceps (Red-headed krait).